Consider the following 381-residue polypeptide: MIISASTDYRAAAQRKLPPFLFHYADGGAYAEHTLRHNVSDLAGIALRQRVLKNMSELSLETRLFDETLSMPVALAPVGLTGMYARRGEVQAARAAAAHGIPFTMSTVSVCPIEEVAPAIDRPMWFQLYVLKDRGFMRNALERAKAAGVKTLVFTVDMPVPGARYRDAHSGMSGANGPMRRVLQAMTHPEWAWDVGVMGRPHDLGNISKYRGNPTGLADYIGWLGSNFDPSISWKDLEWIREFWDGPMIIKGILDADDARDAVKFGADGIVVSNHGGRQLDGVLSSARALPAIADAVKGDLKILADSGIRSGLDVVRMIALGADTVLIGRAFLWALAVHGQAGVKNLLELFEKEMRVAMVLTGAKAISEISRDSLVRELGA.

Residues 1–380 (MIISASTDYR…SRDSLVRELG (380 aa)) enclose the FMN hydroxy acid dehydrogenase domain. Y24 is a binding site for substrate. FMN-binding residues include S106 and Q127. Position 129 (Y129) interacts with substrate. Position 155 (T155) interacts with FMN. R164 is a substrate binding site. K251 is a binding site for FMN. H275 (proton acceptor) is an active-site residue. Substrate is bound at residue R278. 306 to 330 (DSGIRSGLDVVRMIALGADTVLIGR) is an FMN binding site.

This sequence belongs to the FMN-dependent alpha-hydroxy acid dehydrogenase family. As to quaternary structure, homotetramer. The cofactor is FMN.

It is found in the cell inner membrane. It catalyses the reaction (S)-lactate + A = pyruvate + AH2. In terms of biological role, catalyzes the conversion of L-lactate to pyruvate. Is coupled to the respiratory chain. This Pseudomonas putida (strain W619) protein is L-lactate dehydrogenase.